Consider the following 138-residue polypeptide: Basic phospholipase A2 homolog bothropstoxin-II (138 aa).

A signal peptide spans 1–16; sequence MRTLWIMAVLLVGVEG. 7 disulfides stabilise this stretch: Cys-42-Cys-131, Cys-44-Cys-60, Cys-59-Cys-111, Cys-65-Cys-138, Cys-66-Cys-104, Cys-73-Cys-97, and Cys-91-Cys-102. An important for membrane-damaging activities in eukaryotes and bacteria; heparin-binding region spans residues 121 to 133; that stretch reads KRYMAYPDVLCKK.

It belongs to the phospholipase A2 family. Group II subfamily. D49 sub-subfamily. As to quaternary structure, homodimer; non-covalently linked (probable alternative/compact dimer conformation). As to expression, expressed by the venom gland.

Its subcellular location is the secreted. Snake venom phospholipase A2 (PLA2) that shows low enzymatic activity even tough it conserves the catalytic residues. Shows a strong myotoxic activity and induces indirect hemolysis, anticoagulant properties, and cytotoxic activities. In vivo, it induces muscle necrosis, accompanied by polymorphonuclear cell infiltration, and edema in the mouse paw. It exerts its function even in the absence of extracellular calcium, indicating it is not a calcium-dependent enzyme. A model of myotoxic mechanism has been proposed: an apo Lys49-PLA2 is activated by the entrance of a hydrophobic molecule (e.g. fatty acid) at the hydrophobic channel of the protein leading to a reorientation of a monomer. This reorientation causes a transition between 'inactive' to 'active' states, causing alignment of C-terminal and membrane-docking sites (MDoS) side-by-side and putting the membrane-disruption sites (MDiS) in the same plane, exposed to solvent and in a symmetric position for both monomers. The MDoS region stabilizes the toxin on membrane by the interaction of charged residues with phospholipid head groups. Subsequently, the MDiS region destabilizes the membrane with penetration of hydrophobic residues. This insertion causes a disorganization of the membrane, allowing an uncontrolled influx of ions (i.e. calcium and sodium), and eventually triggering irreversible intracellular alterations and cell death. In Bothrops jararacussu (Jararacussu), this protein is Basic phospholipase A2 homolog bothropstoxin-II.